The following is a 322-amino-acid chain: Cytochrome c biogenesis protein CcsA (322 aa).

8 consecutive transmembrane segments (helical) span residues 9–29 (ILTHISFSIVSIVITLHLITL), 44–64 (GMIATFLCLTGLLTTRWIYSG), 71–91 (LYESLIFLSWSFSLIHIVPYF), 98–118 (LTTITASITIFTQGFATSGLL), 143–163 (MILSYAALLCGSLLSVALLVI), 226–246 (VISLGFIFLTIGILSGAVWAN), 253–273 (WSWDPKETWAFITWIVFAIYL), and 287–307 (AIVATLGFLIIWICYFGVNLL).

The protein belongs to the CcmF/CycK/Ccl1/NrfE/CcsA family. In terms of assembly, may interact with Ccs1.

The protein resides in the plastid. The protein localises to the chloroplast thylakoid membrane. Functionally, required during biogenesis of c-type cytochromes (cytochrome c6 and cytochrome f) at the step of heme attachment. This chain is Cytochrome c biogenesis protein CcsA, found in Helianthus annuus (Common sunflower).